The following is a 598-amino-acid chain: Fructan 6-exohydrolase (598 aa).

A signal peptide spans 1 to 30 (MAARLPLAACVVAFHLCLLLSSLVRSPSTA). Residue Asp-65 is part of the active site. Residues Asn-93, Asn-288, and Asn-351 are each glycosylated (N-linked (GlcNAc...) asparagine). A disulfide bridge connects residues Cys-451 and Cys-497. Residue Asn-572 is glycosylated (N-linked (GlcNAc...) asparagine).

The protein belongs to the glycosyl hydrolase 32 family. As to expression, expressed in leaves, stems, roots and inflorescences. Maximum expression is detected in stems, particularly the penultimate internode.

The catalysed reaction is Hydrolysis of terminal, non-reducing (2-&gt;6)-linked beta-D-fructofuranose residues in fructans.. With respect to regulation, not inhibited by sucrose. In terms of biological role, hydrolyzes levan-type beta-(2-&gt;6)-linked fructans to fructose, but not inulin-type beta-(2-&gt;1)-linked fructans. This chain is Fructan 6-exohydrolase, found in Triticum aestivum (Wheat).